The sequence spans 193 residues: Peptidyl-tRNA hydrolase (193 aa).

Y17 serves as a coordination point for tRNA. H22 serves as the catalytic Proton acceptor. 3 residues coordinate tRNA: Y68, N70, and N116.

It belongs to the PTH family. As to quaternary structure, monomer.

Its subcellular location is the cytoplasm. It catalyses the reaction an N-acyl-L-alpha-aminoacyl-tRNA + H2O = an N-acyl-L-amino acid + a tRNA + H(+). Hydrolyzes ribosome-free peptidyl-tRNAs (with 1 or more amino acids incorporated), which drop off the ribosome during protein synthesis, or as a result of ribosome stalling. In terms of biological role, catalyzes the release of premature peptidyl moieties from peptidyl-tRNA molecules trapped in stalled 50S ribosomal subunits, and thus maintains levels of free tRNAs and 50S ribosomes. The sequence is that of Peptidyl-tRNA hydrolase from Chromobacterium violaceum (strain ATCC 12472 / DSM 30191 / JCM 1249 / CCUG 213 / NBRC 12614 / NCIMB 9131 / NCTC 9757 / MK).